A 786-amino-acid chain; its full sequence is Aculeacin-A acylase (786 aa).

An N-terminal signal peptide occupies residues 1–22 (MTSSYMRLKAAAIAFGVIVATA). The propeptide occupies 23–34 (AVPSPASGREHD). A substrate-binding region spans residues 35-130 (GGYAALIRRA…PRDGVRAPCD (96 aa)). The propeptide at 215–229 (AAIAAALDGTSAGIG) is spacer peptide. A possible recognition-sequence of an AAC processing enzyme region spans residues 220–239 (ALDGTSAGIGSNAYGLGAQA). The active-site Nucleophile is the S230. Residues 658–689 (ACNGSPASPSTRSVGDIHTDSRGERRIPIHGG) are disordered. Positions 672-684 (GDIHTDSRGERRI) are enriched in basic and acidic residues.

It belongs to the peptidase S45 family. In terms of assembly, heterodimer of a small subunit and a large subunit processed from the same precursor.

It is found in the secreted. Catalyzes the hydrolysis of the palmitoyl moiety of the antifungal antibiotic, aculeacin-A, giving a hexapeptide moiety and a long chain fatty acid. The chain is Aculeacin-A acylase (aac) from Actinoplanes utahensis.